The primary structure comprises 299 residues: ATP phosphoribosyltransferase (299 aa).

The protein belongs to the ATP phosphoribosyltransferase family. Long subfamily. Equilibrium between an active dimeric form, an inactive hexameric form and higher aggregates. Interconversion between the various forms is largely reversible and is influenced by the natural substrates and inhibitors of the enzyme. The cofactor is Mg(2+).

It is found in the cytoplasm. The enzyme catalyses 1-(5-phospho-beta-D-ribosyl)-ATP + diphosphate = 5-phospho-alpha-D-ribose 1-diphosphate + ATP. It functions in the pathway amino-acid biosynthesis; L-histidine biosynthesis; L-histidine from 5-phospho-alpha-D-ribose 1-diphosphate: step 1/9. Its activity is regulated as follows. Feedback inhibited by histidine. Functionally, catalyzes the condensation of ATP and 5-phosphoribose 1-diphosphate to form N'-(5'-phosphoribosyl)-ATP (PR-ATP). Has a crucial role in the pathway because the rate of histidine biosynthesis seems to be controlled primarily by regulation of HisG enzymatic activity. In Serratia proteamaculans (strain 568), this protein is ATP phosphoribosyltransferase.